A 378-amino-acid chain; its full sequence is 5-amino-6-(D-ribitylamino)uracil--L-tyrosine 4-hydroxyphenyl transferase (378 aa).

Residues 59-306 form the Radical SAM core domain; that stretch reads VTYVINRNIN…TAVARIYLGN (248 aa). Positions 73, 77, and 80 each coordinate [4Fe-4S] cluster.

This sequence belongs to the radical SAM superfamily. CofH family. Consists of two subunits, CofG and CofH. It depends on [4Fe-4S] cluster as a cofactor.

The catalysed reaction is 5-amino-6-(D-ribitylamino)uracil + L-tyrosine + S-adenosyl-L-methionine = 5-amino-5-(4-hydroxybenzyl)-6-(D-ribitylimino)-5,6-dihydrouracil + 2-iminoacetate + 5'-deoxyadenosine + L-methionine + H(+). It functions in the pathway cofactor biosynthesis; coenzyme F0 biosynthesis. Its function is as follows. Catalyzes the radical-mediated synthesis of 5-amino-5-(4-hydroxybenzyl)-6-(D-ribitylimino)-5,6-dihydrouracil from 5-amino-6-(D-ribitylamino)uracil and L-tyrosine. The chain is 5-amino-6-(D-ribitylamino)uracil--L-tyrosine 4-hydroxyphenyl transferase from Microcystis aeruginosa (strain NIES-843 / IAM M-2473).